The chain runs to 284 residues: D-tagatose-1,6-bisphosphate aldolase subunit GatY (284 aa).

Residue Asp-82 is the Proton donor of the active site. His-83 and His-180 together coordinate Zn(2+). Gly-181 contacts dihydroxyacetone phosphate. Residue His-208 coordinates Zn(2+). Residues 209 to 211 and 230 to 233 contribute to the dihydroxyacetone phosphate site; these read GAS and NVAT.

This sequence belongs to the class II fructose-bisphosphate aldolase family. TagBP aldolase GatY subfamily. In terms of assembly, forms a complex with GatZ. Requires Zn(2+) as cofactor.

It catalyses the reaction D-tagatofuranose 1,6-bisphosphate = D-glyceraldehyde 3-phosphate + dihydroxyacetone phosphate. The protein operates within carbohydrate metabolism; D-tagatose 6-phosphate degradation; D-glyceraldehyde 3-phosphate and glycerone phosphate from D-tagatose 6-phosphate: step 2/2. In terms of biological role, catalytic subunit of the tagatose-1,6-bisphosphate aldolase GatYZ, which catalyzes the reversible aldol condensation of dihydroxyacetone phosphate (DHAP or glycerone-phosphate) with glyceraldehyde 3-phosphate (G3P) to produce tagatose 1,6-bisphosphate (TBP). Requires GatZ subunit for full activity and stability. Is involved in the catabolism of galactitol. The sequence is that of D-tagatose-1,6-bisphosphate aldolase subunit GatY from Escherichia coli O7:K1 (strain IAI39 / ExPEC).